A 61-amino-acid polypeptide reads, in one-letter code: Large ribosomal subunit protein uL30 (61 aa).

Belongs to the universal ribosomal protein uL30 family. Part of the 50S ribosomal subunit.

This is Large ribosomal subunit protein uL30 from Chlorobaculum parvum (strain DSM 263 / NCIMB 8327) (Chlorobium vibrioforme subsp. thiosulfatophilum).